Here is an 864-residue protein sequence, read N- to C-terminus: Leucine--tRNA ligase (864 aa).

Residues 42-52 (PYPSGKLHMGH) carry the 'HIGH' region motif. Positions 624-628 (KMSKS) match the 'KMSKS' region motif. Lys-627 is a binding site for ATP.

It belongs to the class-I aminoacyl-tRNA synthetase family.

It is found in the cytoplasm. It catalyses the reaction tRNA(Leu) + L-leucine + ATP = L-leucyl-tRNA(Leu) + AMP + diphosphate. The chain is Leucine--tRNA ligase from Burkholderia lata (strain ATCC 17760 / DSM 23089 / LMG 22485 / NCIMB 9086 / R18194 / 383).